Here is a 316-residue protein sequence, read N- to C-terminus: tRNA-cytidine(32) 2-sulfurtransferase (316 aa).

The short motif at 45-50 (SGGKDS) is the PP-loop motif element. [4Fe-4S] cluster contacts are provided by Cys-120, Cys-123, and Cys-211.

This sequence belongs to the TtcA family. Homodimer. Requires Mg(2+) as cofactor. It depends on [4Fe-4S] cluster as a cofactor.

The protein resides in the cytoplasm. The catalysed reaction is cytidine(32) in tRNA + S-sulfanyl-L-cysteinyl-[cysteine desulfurase] + AH2 + ATP = 2-thiocytidine(32) in tRNA + L-cysteinyl-[cysteine desulfurase] + A + AMP + diphosphate + H(+). It functions in the pathway tRNA modification. Its function is as follows. Catalyzes the ATP-dependent 2-thiolation of cytidine in position 32 of tRNA, to form 2-thiocytidine (s(2)C32). The sulfur atoms are provided by the cysteine/cysteine desulfurase (IscS) system. This is tRNA-cytidine(32) 2-sulfurtransferase from Shewanella sediminis (strain HAW-EB3).